Here is a 62-residue protein sequence, read N- to C-terminus: Photosystem II reaction center protein Z (62 aa).

The next 2 membrane-spanning stretches (helical) occupy residues 8–28 (ALIS…VAYA) and 41–61 (WLGS…NFFV).

Belongs to the PsbZ family. As to quaternary structure, PSII is composed of 1 copy each of membrane proteins PsbA, PsbB, PsbC, PsbD, PsbE, PsbF, PsbH, PsbI, PsbJ, PsbK, PsbL, PsbM, PsbT, PsbX, PsbY, PsbZ, Psb30/Ycf12, peripheral proteins PsbO, CyanoQ (PsbQ), PsbU, PsbV and a large number of cofactors. It forms dimeric complexes.

It is found in the cellular thylakoid membrane. Functionally, may control the interaction of photosystem II (PSII) cores with the light-harvesting antenna, regulates electron flow through the 2 photosystem reaction centers. PSII is a light-driven water plastoquinone oxidoreductase, using light energy to abstract electrons from H(2)O, generating a proton gradient subsequently used for ATP formation. The chain is Photosystem II reaction center protein Z from Trichormus variabilis (strain ATCC 29413 / PCC 7937) (Anabaena variabilis).